The chain runs to 84 residues: uncharacterized protein (84 aa).

A run of 2 helical transmembrane segments spans residues 27-47 and 52-72; these read INHH…LAML and IGHV…FVLI.

This sequence to M.tuberculosis Rv2876.

It is found in the cell membrane. This is an uncharacterized protein from Mycobacterium leprae (strain TN).